Reading from the N-terminus, the 496-residue chain is L-arabinose isomerase (496 aa).

Residues Glu-306, Glu-331, His-348, and His-447 each coordinate Mn(2+).

Belongs to the arabinose isomerase family. The cofactor is Mn(2+).

The enzyme catalyses beta-L-arabinopyranose = L-ribulose. Its pathway is carbohydrate degradation; L-arabinose degradation via L-ribulose; D-xylulose 5-phosphate from L-arabinose (bacterial route): step 1/3. Its function is as follows. Catalyzes the conversion of L-arabinose to L-ribulose. The sequence is that of L-arabinose isomerase from Geobacillus kaustophilus (strain HTA426).